We begin with the raw amino-acid sequence, 1032 residues long: Probable ATP-dependent RNA helicase DDX46 (1032 aa).

The span at 1 to 24 (MGRESRHYRKRSASRGRSGSRSRS) shows a compositional bias: basic residues. Positions 1 to 227 (MGRESRHYRK…NEMEDEELDP (227 aa)) are disordered. The N-myristoyl glycine moiety is linked to residue Gly-2. Over residues 26–49 (SPSDKRSKRGDDRRSRSRDRDRRR) the composition is skewed to basic and acidic residues. Composition is skewed to basic residues over residues 50–73 (ERSR…RSRS) and 81–103 (ERRR…RRSR). Residues 112-200 (KKAENRSRSK…EMKQGKKWSL (89 aa)) are compositionally biased toward basic and acidic residues. A coiled-coil region spans residues 152-197 (DQNKLEEEMRKRKERVEKWREEQRKKAMENIGELKKEIEEMKQGKK). Lys-186 is covalently cross-linked (Glycyl lysine isopeptide (Lys-Gly) (interchain with G-Cter in SUMO2)). A Phosphoserine modification is found at Ser-199. Positions 201–211 (EDDDDDEDDPA) are enriched in acidic residues. An N6-acetyllysine modification is found at Lys-263. Tyr-294 is subject to Phosphotyrosine. Residues Ser-295 and Ser-296 each carry the phosphoserine modification. A Glycyl lysine isopeptide (Lys-Gly) (interchain with G-Cter in SUMO2) cross-link involves residue Lys-325. At Ser-346 the chain carries Phosphoserine. Positions 372–400 (KSWVQCGISMKILNSLKKHGYEKPTPIQT) match the Q motif motif. Residues 403 to 581 (IPAIMSGRDL…RRILSKPIEV (179 aa)) enclose the Helicase ATP-binding domain. The DEAD box signature appears at 529-532 (DEAD). Residues 592–753 (DVEQQVIVIE…AVPPDLEKLW (162 aa)) form the Helicase C-terminal domain. Lys-776 bears the N6-acetyllysine mark. Residue Lys-779 forms a Glycyl lysine isopeptide (Lys-Gly) (interchain with G-Cter in SUMO2) linkage. Residue Ser-804 is modified to Phosphoserine. Position 904 is an N6-acetyllysine (Lys-904). Glycyl lysine isopeptide (Lys-Gly) (interchain with G-Cter in SUMO2) cross-links involve residues Lys-908 and Lys-916. The residue at position 929 (Ser-929) is a Phosphoserine.

The protein belongs to the DEAD box helicase family. DDX46/PRP5 subfamily. As to quaternary structure, component of the 17S U2 SnRNP complex, a ribonucleoprotein complex that contains small nuclear RNA (snRNA) U2 and a number of specific proteins. Within the 17S U2 SnRNP complex, DDX46 is part of the SF3B subcomplex, which is required for 'A' complex assembly formed by the stable binding of U2 snRNP to the branchpoint sequence in pre-mRNA. Recruited to the 17S U2 SnRNP complex following release of DDX42; DDX42 and DDX46 bind the SF3B subcomplex in a competitive manner.

The protein resides in the nucleus speckle. It localises to the nucleus. It is found in the cajal body. It catalyses the reaction ATP + H2O = ADP + phosphate + H(+). Functionally, component of the 17S U2 SnRNP complex of the spliceosome, a large ribonucleoprotein complex that removes introns from transcribed pre-mRNAs. The 17S U2 SnRNP complex (1) directly participates in early spliceosome assembly and (2) mediates recognition of the intron branch site during pre-mRNA splicing by promoting the selection of the pre-mRNA branch-site adenosine, the nucleophile for the first step of splicing. Within the 17S U2 SnRNP complex, DDX46 plays essential roles during assembly of pre-spliceosome and proofreading of the branch site. The polypeptide is Probable ATP-dependent RNA helicase DDX46 (Ddx46) (Rattus norvegicus (Rat)).